Reading from the N-terminus, the 272-residue chain is Type III pantothenate kinase (272 aa).

Position 6–13 (6–13 (NVNNTNTL)) interacts with ATP. Substrate is bound at residue 113-116 (GADR). Asp115 acts as the Proton acceptor in catalysis. Asp135 contacts K(+). An ATP-binding site is contributed by Thr138. Thr190 is a binding site for substrate.

The protein belongs to the type III pantothenate kinase family. As to quaternary structure, homodimer. The cofactor is NH4(+). It depends on K(+) as a cofactor.

It is found in the cytoplasm. It catalyses the reaction (R)-pantothenate + ATP = (R)-4'-phosphopantothenate + ADP + H(+). The protein operates within cofactor biosynthesis; coenzyme A biosynthesis; CoA from (R)-pantothenate: step 1/5. In terms of biological role, catalyzes the phosphorylation of pantothenate (Pan), the first step in CoA biosynthesis. In Acidobacterium capsulatum (strain ATCC 51196 / DSM 11244 / BCRC 80197 / JCM 7670 / NBRC 15755 / NCIMB 13165 / 161), this protein is Type III pantothenate kinase.